The sequence spans 276 residues: Formamidopyrimidine-DNA glycosylase (276 aa).

Proline 2 acts as the Schiff-base intermediate with DNA in catalysis. Residue glutamate 3 is the Proton donor of the active site. Catalysis depends on lysine 58, which acts as the Proton donor; for beta-elimination activity. The DNA site is built by histidine 94, arginine 112, and arginine 157. The segment at 242–276 (FVYDRAGLPCRVCGTPIKQIVQGQRSTYFCPTCQR) adopts an FPG-type zinc-finger fold. Residue arginine 266 is the Proton donor; for delta-elimination activity of the active site.

Belongs to the FPG family. As to quaternary structure, monomer. Zn(2+) is required as a cofactor.

It carries out the reaction Hydrolysis of DNA containing ring-opened 7-methylguanine residues, releasing 2,6-diamino-4-hydroxy-5-(N-methyl)formamidopyrimidine.. The enzyme catalyses 2'-deoxyribonucleotide-(2'-deoxyribose 5'-phosphate)-2'-deoxyribonucleotide-DNA = a 3'-end 2'-deoxyribonucleotide-(2,3-dehydro-2,3-deoxyribose 5'-phosphate)-DNA + a 5'-end 5'-phospho-2'-deoxyribonucleoside-DNA + H(+). Involved in base excision repair of DNA damaged by oxidation or by mutagenic agents. Acts as a DNA glycosylase that recognizes and removes damaged bases. Has a preference for oxidized purines, such as 7,8-dihydro-8-oxoguanine (8-oxoG). Has AP (apurinic/apyrimidinic) lyase activity and introduces nicks in the DNA strand. Cleaves the DNA backbone by beta-delta elimination to generate a single-strand break at the site of the removed base with both 3'- and 5'-phosphates. In Paraburkholderia xenovorans (strain LB400), this protein is Formamidopyrimidine-DNA glycosylase.